The sequence spans 843 residues: DNA helicase MCM8 (843 aa).

Residues 1 to 23 (MSQGWRGGWSGGRGGNPYAGGWR) show a composition bias toward gly residues. The tract at residues 1 to 52 (MSQGWRGGWSGGRGGNPYAGGWRGRPWRGRGQGGSWSRNSGRDPVCFSTAPP) is disordered. Positions 394 to 601 (LFQLIVNSLC…DHDHLLSEHV (208 aa)) constitute an MCM domain. An ATP-binding site is contributed by 446–453 (GDPGLGKS).

The protein belongs to the MCM family. Component of the MCM8-MCM9 complex, which forms a hexamer composed of mcm8 and mcm9.

Its subcellular location is the nucleus. It catalyses the reaction ATP + H2O = ADP + phosphate + H(+). Its function is as follows. Component of the MCM8-MCM9 complex, a complex involved in homologous recombination repair following DNA interstrand cross-links and plays a key role during gametogenesis. The MCM8-MCM9 complex probably acts as a hexameric helicase required to process aberrant forks into homologous recombination substrates and to orchestrate homologous recombination with resection, fork stabilization and fork restart. In eggs, required for elongation during DNA replication by facilitating the recruitment of rpa2/rpa34 and stimulating the processivity of DNA polymerases at replication foci. Probably not required for DNA replication in other cells. The sequence is that of DNA helicase MCM8 (mcm8) from Xenopus tropicalis (Western clawed frog).